The sequence spans 179 residues: DELTA-actitoxin-Afr1e (179 aa).

Positions 1-29 (SADVAGAVIDGAGLGFDVLKTVLEALGNV) are N-terminal alpha-helix that contributes to the pore. An N-terminal region region spans residues 11-30 (GAGLGFDVLKTVLEALGNVK). Arginine 31 contributes to the an N-(acyl)-sphingosylphosphocholine binding site. The N-acetyl-D-glucosamine 6-sulfate site is built by tyrosine 51 and arginine 53. Residues arginine 53, serine 54, arginine 79, glycine 85, tyrosine 108, tyrosine 113, serine 114, tryptophan 116, tyrosine 133, tyrosine 137, tyrosine 138, arginine 144, and glycine 168 each contribute to the an N-(acyl)-sphingosylphosphocholine site. The interval 105–120 (SVPYDYNWYSNWWNVR) is trp-rich region, which is important for the binding to lipid membrane. Tyrosine 138 contacts N-acetyl-D-glucosamine 6-sulfate. The short motif at 144–146 (RGD) is the Cell attachment site, crucial for protein stability element.

This sequence belongs to the actinoporin family. Sea anemone subfamily. In terms of assembly, octamer or nonamer in membranes. Monomer in the soluble state.

The protein localises to the secreted. Its subcellular location is the nematocyst. It localises to the target cell membrane. Its function is as follows. Pore-forming toxin (PFT) that consists of a crown-shaped octamer or nonamer that forms cation-selective hydrophilic pores of about 1.5 nm (inside) and 13 nm (outside) and causes cytolysis. It causes cardiac stimulation. Also causes hemolysis (HC(50)=1.6 nM). Interestingly, the Phe-16 is crucial for hemolysis. Pore formation is a multi-step process that involves specific recognition of membrane sphingomyelin (but neither cholesterol nor phosphatidylcholine) using aromatic rich region and adjacent phosphocholine (POC) binding site, firm binding to the membrane (mainly driven by hydrophobic interactions) accompanied by the transfer of the N-terminal region to the lipid-water interface and finally pore formation after oligomerization of monomers. It is probable that a dimeric form is an assembly intermediate before the complete oligomerization. The formation of stable pores occurs only in vesicles composed of DOPC/SM (there is no oligomerization when the PFT is treated with vesicles of DOPC or SM alone). The transmembrane pore displays 8 lateral perforations, one at each subunit-subunit interface, partially occupied by the acyl-chain region of a bridging lipid. Each pore contains 24 lipid molecules, firmly bound to each subunit, that is, 3 lipids (L1, L2, L3, L4 and/or L5) are associated to each subunit. Lipid L1 bridges 2 subunits, whereas lipids L2 and L3 bind to sites at single subunit. The sequence is that of DELTA-actitoxin-Afr1e from Actinia fragacea (Strawberry anemone).